We begin with the raw amino-acid sequence, 23 residues long: uncharacterized protein (23 aa).

It localises to the plastid. Its subcellular location is the chloroplast. This is an uncharacterized protein from Zea mays (Maize).